The chain runs to 536 residues: Cytoplasmic dynein 2 intermediate chain 2 (536 aa).

Ser15 is modified (phosphoserine). The interval 80–93 (RNHVDAQVQTEAPV) is DYNLL2 binding. The DYNLRB1 binding stretch occupies residues 106-131 (PRLAAFLRRVEAMVIRELNKNWQSHA). WD repeat units lie at residues 215 to 255 (EVPS…DPLL), 264 to 308 (THTD…QLQL), 390 to 430 (PHGG…PLTS), 433 to 473 (LSLK…QKPT), and 480 to 520 (QDES…TEQG).

The protein belongs to the dynein light intermediate chain family. The cytoplasmic dynein 2 complex consists of two catalytic heavy chains (HCs) and a number of non-catalytic subunits presented by intermediate chains (ICs), light intermediate chains (LICs) and light chains (LCs). Among them, a heavy chain (DYNC2H1), two intermediate chains (DYNC2I2 and DYNC2I1), a light intermediate chain (DYNC2LI1), and a light chain (DYNLT2B) are unique to the cytoplasmic dynein complex 2, but a subset of the light chains are also shared by dynein-1 and dynein-2 complexes. Interacts with DYNC2I1; their C-terminal domains each bind a copy of the heavy chain, and their extended N-terminal regions are held together by an array of light chain dimers. Interacts with DYNLL2; this interaction is essential for dynein-2-mediated retrograde trafficking of ciliary proteins. Interacts with DYNLRB1; this interaction is essential for dynein-2-mediated retrograde trafficking of ciliary proteins. Interacts (via the WD domains) with MAP3K7 and TAB3. Interacts (via WD domains) with TAB2 (via C-terminus). Interacts (via WD domains) with TRAF6 (via TRAF-type domains). Expressed in several cell lines (at protein level).

It is found in the cytoplasm. It localises to the cytoskeleton. Its subcellular location is the cilium basal body. The protein resides in the cilium axoneme. The protein localises to the microtubule organizing center. It is found in the centrosome. It localises to the cell projection. Its subcellular location is the cilium. The protein resides in the filopodium. In terms of biological role, acts as one of several non-catalytic accessory components of the cytoplasmic dynein 2 complex (dynein-2 complex), a motor protein complex that drives the movement of cargos along microtubules within cilia and flagella in concert with the intraflagellar transport (IFT) system. DYNC2I2 plays a major role in retrograde ciliary protein trafficking and in ciliogenesis. Required also to maintain a functional transition zone. Functionally, acts as a negative regulator of the Toll-like and IL-1R receptor signaling pathways. Inhibits the MAP3K7-induced NF-kappa-B activation pathway. Inhibits MAP3K7 phosphorylation at 'Thr-184' and 'Thr-187' upon Il-1 beta stimulation. In Homo sapiens (Human), this protein is Cytoplasmic dynein 2 intermediate chain 2.